A 129-amino-acid polypeptide reads, in one-letter code: Glycine cleavage system H protein (129 aa).

One can recognise a Lipoyl-binding domain in the interval 24–106; that stretch reads LLKIGVSEFA…IGEGWLVILK (83 aa). An N6-lipoyllysine modification is found at K65.

This sequence belongs to the GcvH family. In terms of assembly, the glycine cleavage system is composed of four proteins: P, T, L and H. The cofactor is (R)-lipoate.

Its function is as follows. The glycine cleavage system catalyzes the degradation of glycine. The H protein shuttles the methylamine group of glycine from the P protein to the T protein. The polypeptide is Glycine cleavage system H protein (Prochlorococcus marinus (strain MIT 9312)).